A 65-amino-acid chain; its full sequence is Large ribosomal subunit protein bL35 (65 aa).

It belongs to the bacterial ribosomal protein bL35 family.

This Prochlorococcus marinus (strain MIT 9313) protein is Large ribosomal subunit protein bL35.